The sequence spans 896 residues: Alanine--tRNA ligase (896 aa).

Residues Q439 to S456 are compositionally biased toward basic and acidic residues. The interval Q439–R459 is disordered. The Zn(2+) site is built by H579, H583, C681, and H685.

The protein belongs to the class-II aminoacyl-tRNA synthetase family. The cofactor is Zn(2+).

It is found in the cytoplasm. It catalyses the reaction tRNA(Ala) + L-alanine + ATP = L-alanyl-tRNA(Ala) + AMP + diphosphate. In terms of biological role, catalyzes the attachment of alanine to tRNA(Ala) in a two-step reaction: alanine is first activated by ATP to form Ala-AMP and then transferred to the acceptor end of tRNA(Ala). Also edits incorrectly charged Ser-tRNA(Ala) and Gly-tRNA(Ala) via its editing domain. The polypeptide is Alanine--tRNA ligase (Nocardioides sp. (strain ATCC BAA-499 / JS614)).